The primary structure comprises 454 residues: Zeatin O-xylosyltransferase (454 aa).

The protein belongs to the UDP-glycosyltransferase family. As to expression, high level in young seeds, less in older seeds and very low in roots.

The catalysed reaction is zeatin + UDP-alpha-D-xylose = O-beta-D-xylosylzeatin + UDP + H(+). Utilizes UDP-xylose as the sugar donor and catalyzes the formation of o-xylosylzeatin from zeatin. Does not act on UDP-glucose. This chain is Zeatin O-xylosyltransferase, found in Phaseolus vulgaris (Kidney bean).